A 139-amino-acid chain; its full sequence is Small ribosomal subunit protein bS6 (139 aa).

It belongs to the bacterial ribosomal protein bS6 family.

In terms of biological role, binds together with bS18 to 16S ribosomal RNA. The chain is Small ribosomal subunit protein bS6 from Borreliella afzelii (strain PKo) (Borrelia afzelii).